The sequence spans 126 residues: Ejaculatory bulb-specific protein 3 (126 aa).

The N-terminal stretch at 1-17 (MKMILALVVLGLVLVAA) is a signal peptide.

The protein belongs to the insect A10/OS-D protein family. As to expression, specifically expressed in the ejaculatory bulb and seminal fluid.

The protein resides in the secreted. Its function is as follows. Protein component of the posterior mating plug. The sequence is that of Ejaculatory bulb-specific protein 3 from Drosophila melanogaster (Fruit fly).